Here is a 78-residue protein sequence, read N- to C-terminus: Conotoxin TsMEKL-P012 (78 aa).

Residues 1–19 form the signal peptide; the sequence is MEKLTILLLLAAVLVLAQA. Residues 20–38 constitute a propeptide that is removed on maturation; it reads LIKKGGGEKRQKEKINFLS. Cystine bridges form between Cys-52–Cys-66, Cys-59–Cys-70, and Cys-65–Cys-75.

This sequence belongs to the conotoxin O2 superfamily. As to expression, expressed by the venom duct.

Its subcellular location is the secreted. This is Conotoxin TsMEKL-P012 from Conus tessulatus (Tessellate cone).